Consider the following 333-residue polypeptide: Mitochondrial thiamine pyrophosphate carrier 1 (333 aa).

3 Solcar repeats span residues 12 to 115 (GSRL…ITQF), 129 to 215 (PPSV…LRPR), and 222 to 318 (PYSS…ALKL). A run of 6 helical transmembrane segments spans residues 17–35 (VTAA…IAPL), 96–112 (LLYV…YRSI), 135–155 (FIAG…LDLL), 190–209 (GLGP…FCVY), 221–238 (LPYS…SVMA), and 293–310 (GLTV…VTMW).

Belongs to the mitochondrial carrier (TC 2.A.29) family.

Its subcellular location is the mitochondrion inner membrane. Its function is as follows. Mitochondrial transporter that mediates uptake of thiamine pyrophosphate (ThPP) into mitochondria. The protein is Mitochondrial thiamine pyrophosphate carrier 1 (tpc-1) of Neurospora crassa (strain ATCC 24698 / 74-OR23-1A / CBS 708.71 / DSM 1257 / FGSC 987).